The chain runs to 645 residues: Putative bifunctional exonuclease/endonuclease protein MT2247 (645 aa).

One can recognise an Exonuclease domain in the interval 44 to 207; that stretch reads VVVDLETTGG…DDARATVDVL (164 aa). In terms of domain architecture, GIY-YIG spans 248 to 326; that stretch reads HRPGVYLFRG…LSTHAPPYNR (79 aa). The disordered stretch occupies residues 603–645; that stretch reads WQSDLPTEPHPSREQLFGRTGVDCRTGPPQPLLPGRQPFSTAG. The segment covering 635 to 645 has biased composition (low complexity); it reads LPGRQPFSTAG.

The polypeptide is Putative bifunctional exonuclease/endonuclease protein MT2247 (Mycobacterium tuberculosis (strain CDC 1551 / Oshkosh)).